The sequence spans 190 residues: Protein GrpE (190 aa).

Over residues 1-18 the composition is skewed to polar residues; that stretch reads MTETPNTSSEEIQTSEPS. The tract at residues 1-21 is disordered; that stretch reads MTETPNTSSEEIQTSEPSPDN.

It belongs to the GrpE family. In terms of assembly, homodimer.

The protein resides in the cytoplasm. Its function is as follows. Participates actively in the response to hyperosmotic and heat shock by preventing the aggregation of stress-denatured proteins, in association with DnaK and GrpE. It is the nucleotide exchange factor for DnaK and may function as a thermosensor. Unfolded proteins bind initially to DnaJ; upon interaction with the DnaJ-bound protein, DnaK hydrolyzes its bound ATP, resulting in the formation of a stable complex. GrpE releases ADP from DnaK; ATP binding to DnaK triggers the release of the substrate protein, thus completing the reaction cycle. Several rounds of ATP-dependent interactions between DnaJ, DnaK and GrpE are required for fully efficient folding. This is Protein GrpE from Chlamydia trachomatis serovar L2 (strain ATCC VR-902B / DSM 19102 / 434/Bu).